A 288-amino-acid chain; its full sequence is Transmembrane and coiled-coil domain-containing protein 5A (288 aa).

Residues 10 to 189 adopt a coiled-coil conformation; the sequence is KKNIISLNMD…ELETGYLERE (180 aa). A helical membrane pass occupies residues 227-249; the sequence is SLLFSTLFFIRLLGYLIFHLSFI.

It belongs to the TMCO5 family. In terms of tissue distribution, only detected in testis (at protein level).

It localises to the endoplasmic reticulum membrane. It is found in the nucleus membrane. This chain is Transmembrane and coiled-coil domain-containing protein 5A (Tmco5a), found in Mus musculus (Mouse).